The primary structure comprises 385 residues: 4-hydroxy-3-methylbut-2-en-1-yl diphosphate synthase (flavodoxin) 2 (385 aa).

Residues C280, C283, C315, and E322 each contribute to the [4Fe-4S] cluster site.

This sequence belongs to the IspG family. The cofactor is [4Fe-4S] cluster.

The enzyme catalyses (2E)-4-hydroxy-3-methylbut-2-enyl diphosphate + oxidized [flavodoxin] + H2O + 2 H(+) = 2-C-methyl-D-erythritol 2,4-cyclic diphosphate + reduced [flavodoxin]. It functions in the pathway isoprenoid biosynthesis; isopentenyl diphosphate biosynthesis via DXP pathway; isopentenyl diphosphate from 1-deoxy-D-xylulose 5-phosphate: step 5/6. Its function is as follows. Converts 2C-methyl-D-erythritol 2,4-cyclodiphosphate (ME-2,4cPP) into 1-hydroxy-2-methyl-2-(E)-butenyl 4-diphosphate. This is 4-hydroxy-3-methylbut-2-en-1-yl diphosphate synthase (flavodoxin) 2 from Streptomyces coelicolor (strain ATCC BAA-471 / A3(2) / M145).